The chain runs to 276 residues: Tumor necrosis factor-inducible gene 6 protein (276 aa).

A signal peptide spans 1–17; the sequence is MIILIYLFVLVWEEAQG. In terms of domain architecture, Link spans 36–129; sequence GVYHREARSG…SERWDAYCYN (94 aa). 3 disulfide bridges follow: C58/C127, C82/C103, and C135/C161. N118 is a glycosylation site (N-linked (GlcNAc...) asparagine). Residues 135–247 enclose the CUB domain; that stretch reads CGGVFTDPKR…GGFQIKYVTV (113 aa). E183, D191, D232, S234, and V235 together coordinate Ca(2+). A disulfide bridge connects residues C188 and C210. N-linked (GlcNAc...) asparagine glycosylation occurs at N258.

Interacts (via Link domain) with inter-alpha-inhibitor (I-alpha-I) component bikunin. Interacts with ITIH2/HC2; this interaction is required for transesterification of the HC to hyaluronan. Interacts (via Link and CUB domains) with ITIH1. Chondroitin sulfate may be required for the stability of the complex. Interacts (via Link domain) with various C-X-C and C-C chemokines including PF4, CXCL8, CXCL11, CXCL12, CCL2, CCL7, CCL19, CCL21, and CCL27; this interaction interferes with chemokine binding to glycosaminoglycans. Interacts (primarily via Link domain) with BMP2; this interaction is inhibited by hyaluronan. Interacts (via both Link and CUB domains) with TNFSF11. Interacts (via CUB domain) with FN1 (via type III repeats 9-14); this interaction enhances fibronectin fibril assembly. TNFAIP6 may act as a bridging molecule between FN1 and THBS1. Vascular smooth muscle cells.

The protein localises to the secreted. Major regulator of extracellular matrix organization during tissue remodeling. Catalyzes the transfer of a heavy chain (HC) from inter-alpha-inhibitor (I-alpha-I) complex to hyaluronan. Cleaves the ester bond between the C-terminus of the HC and GalNAc residue of the chondroitin sulfate chain in I-alpha-I complex followed by transesterification of the HC to hyaluronan. In the process, potentiates the antiprotease function of I-alpha-I complex through release of free bikunin. Acts as a catalyst in the formation of hyaluronan-HC oligomers and hyaluronan-rich matrix surrounding the cumulus cell-oocyte complex, a necessary step for oocyte fertilization. Assembles hyaluronan in pericellular matrices that serve as platforms for receptor clustering and signaling. Enables binding of hyaluronan deposited on the surface of macrophages to LYVE1 on lymphatic endothelium and facilitates macrophage extravasation. Alters hyaluronan binding to functionally latent CD44 on vascular endothelium, switching CD44 into an active state that supports leukocyte rolling. Modulates the interaction of chemokines with extracellular matrix components and proteoglycans on endothelial cell surface, likely preventing chemokine gradient formation. In a negative feedback mechanism, may limit excessive neutrophil recruitment at inflammatory sites by antagonizing the association of CXCL8 with glycosaminoglycans on vascular endothelium. Has a role in osteogenesis and bone remodeling. Inhibits BMP2-dependent differentiation of mesenchymal stem cell to osteoblasts. Protects against bone erosion during inflammation by inhibiting TNFSF11/RANKL-dependent osteoclast activation. This is Tumor necrosis factor-inducible gene 6 protein (TNFAIP6) from Oryctolagus cuniculus (Rabbit).